The chain runs to 277 residues: MNKQSTQKLPHVTTRRLHDMKSEGEKISMLTAYDYTTARILDRAGVDVILVGDSASNVFAGHNTTLPITIDQMIYHARAVVRGVQAETSRAMVVIDMPFMSYQLSSEEALRNAGKIMKENECDAVKIEGGNVIVDTVKRITDVGIPVMGHLGLIPQSIYKFGSYKVRAREEQEAEELLRDAKLLEEAGAFALVLEKIPADLAAEVTASISIPTIGIGAGGACDGQVLVINDMLGLSTEFHPRFVRRYAELDRVIFDAVSRYVDDVRGGTFPGEDESY.

Positions 53 and 96 each coordinate Mg(2+). 3-methyl-2-oxobutanoate-binding positions include 53–54 (DS), Asp96, and Lys126. Glu128 contacts Mg(2+). Residue Glu195 is the Proton acceptor of the active site.

Belongs to the PanB family. In terms of assembly, homodecamer; pentamer of dimers. It depends on Mg(2+) as a cofactor.

Its subcellular location is the cytoplasm. The catalysed reaction is 3-methyl-2-oxobutanoate + (6R)-5,10-methylene-5,6,7,8-tetrahydrofolate + H2O = 2-dehydropantoate + (6S)-5,6,7,8-tetrahydrofolate. It participates in cofactor biosynthesis; (R)-pantothenate biosynthesis; (R)-pantoate from 3-methyl-2-oxobutanoate: step 1/2. In terms of biological role, catalyzes the reversible reaction in which hydroxymethyl group from 5,10-methylenetetrahydrofolate is transferred onto alpha-ketoisovalerate to form ketopantoate. This Prosthecochloris aestuarii (strain DSM 271 / SK 413) protein is 3-methyl-2-oxobutanoate hydroxymethyltransferase.